Consider the following 336-residue polypeptide: Serpentine receptor class gamma-9 (336 aa).

Transmembrane regions (helical) follow at residues 30-50, 64-84, 111-131, 152-172, 200-220, 237-257, and 271-291; these read LLQA…LYVI, FVIY…DIFI, IYYP…IFLT, LSFI…NTII, FLFL…VIMF, LCLA…FEAL, and FLIQ…IMIF.

The protein belongs to the nematode receptor-like protein srg family.

The protein localises to the membrane. This is Serpentine receptor class gamma-9 (srg-9) from Caenorhabditis elegans.